Consider the following 276-residue polypeptide: F-actin-capping protein subunit beta (276 aa).

It belongs to the F-actin-capping protein beta subunit family. Component of the F-actin capping complex, composed of a heterodimer of an alpha and a beta subunit. Subunit of dynactin, a multiprotein complex part of a tripartite complex with dynein and a adapter, such as BICDL1, BICD2 or HOOK3.

The protein resides in the cytoplasm. It localises to the cytoskeleton. Its function is as follows. F-actin-capping proteins bind in a Ca(2+)-independent manner to the fast growing ends of actin filaments (barbed end) thereby blocking the exchange of subunits at these ends. Unlike other capping proteins (such as gelsolin and severin), these proteins do not sever actin filaments. Forms, with CAPZB, the barbed end of the fast growing ends of actin filaments in the dynactin complex and stabilizes dynactin structure. The dynactin multiprotein complex activates the molecular motor dynein for ultra-processive transport along microtubules. This is F-actin-capping protein subunit beta (cpb) from Drosophila melanogaster (Fruit fly).